A 467-amino-acid chain; its full sequence is GTPase Der (467 aa).

EngA-type G domains lie at 25–188 and 199–372; these read PVVA…PEAP and RRVA…ASWE. Residues 31 to 38, 78 to 82, 140 to 143, 205 to 212, 252 to 256, and 317 to 320 each bind GTP; these read GRPNVGKS, DTGGW, NKAD, DTAGL, and NKWD. Residues 373–455 form the KH-like domain; it reads TRVPTAQLNA…PIEIAVRPRK (83 aa).

This sequence belongs to the TRAFAC class TrmE-Era-EngA-EngB-Septin-like GTPase superfamily. EngA (Der) GTPase family. As to quaternary structure, associates with the 50S ribosomal subunit.

Functionally, GTPase that plays an essential role in the late steps of ribosome biogenesis. The sequence is that of GTPase Der from Salinispora arenicola (strain CNS-205).